Here is a 618-residue protein sequence, read N- to C-terminus: Isocitrate dehydrogenase kinase/phosphatase (618 aa).

Residues 332–338 and Lys353 contribute to the ATP site; that span reads APGIKGM. Residue Asp388 is part of the active site.

The protein belongs to the AceK family.

The protein localises to the cytoplasm. The enzyme catalyses L-seryl-[isocitrate dehydrogenase] + ATP = O-phospho-L-seryl-[isocitrate dehydrogenase] + ADP + H(+). Functionally, bifunctional enzyme which can phosphorylate or dephosphorylate isocitrate dehydrogenase (IDH) on a specific serine residue. This is a regulatory mechanism which enables bacteria to bypass the Krebs cycle via the glyoxylate shunt in response to the source of carbon. When bacteria are grown on glucose, IDH is fully active and unphosphorylated, but when grown on acetate or ethanol, the activity of IDH declines drastically concomitant with its phosphorylation. In Methylibium petroleiphilum (strain ATCC BAA-1232 / LMG 22953 / PM1), this protein is Isocitrate dehydrogenase kinase/phosphatase.